The following is a 115-amino-acid chain: Large ribosomal subunit protein bL19 (115 aa).

It belongs to the bacterial ribosomal protein bL19 family.

Functionally, this protein is located at the 30S-50S ribosomal subunit interface and may play a role in the structure and function of the aminoacyl-tRNA binding site. In Latilactobacillus sakei subsp. sakei (strain 23K) (Lactobacillus sakei subsp. sakei), this protein is Large ribosomal subunit protein bL19.